The primary structure comprises 290 residues: MEWSLTQNKLLAFHRLMRTDKPIGALLLLWPTLWALWVATPGVPQLWILAVFVAGVWLMRAAGCVVNDYADRKFDGHVKRTANRPLPSGAVTEKEARALFVVLVLISFLLVLTLNTMTILLSIAALALAWVYPFMKRYTHLPQVVLGAAFGWSIPMAFAAVSESVPLSCWLMFLANILWAVAYDTQYAMVDRDDDVKIGIKSTAILFGQYDKLIIGIFQIGVLALMAIIGELNGLGWGYYWSILVAGALFVYQQKLIANREREACFKAFMNNNYVGLVLFLGLAMSYWHF.

8 consecutive transmembrane segments (helical) span residues 23–43 (IGAL…TPGV), 46–66 (LWIL…GCVV), 99–119 (LFVV…TMTI), 141–161 (LPQV…FAAV), 163–183 (ESVP…AVAY), 213–233 (LIIG…GELN), 234–254 (GLGW…VYQQ), and 268–288 (AFMN…MSYW).

It belongs to the UbiA prenyltransferase family. Mg(2+) is required as a cofactor.

It is found in the cell inner membrane. The enzyme catalyses all-trans-octaprenyl diphosphate + 4-hydroxybenzoate = 4-hydroxy-3-(all-trans-octaprenyl)benzoate + diphosphate. The protein operates within cofactor biosynthesis; ubiquinone biosynthesis. Catalyzes the prenylation of para-hydroxybenzoate (PHB) with an all-trans polyprenyl group. Mediates the second step in the final reaction sequence of ubiquinone-8 (UQ-8) biosynthesis, which is the condensation of the polyisoprenoid side chain with PHB, generating the first membrane-bound Q intermediate 3-octaprenyl-4-hydroxybenzoate. This is 4-hydroxybenzoate octaprenyltransferase from Escherichia coli (strain UTI89 / UPEC).